The primary structure comprises 49 residues: Large ribosomal subunit protein bL33C (49 aa).

Residues 20–49 are disordered; sequence NKNKRNNPDRLEKQKYCPRERKVTLHRETK. Residues 25-49 show a composition bias toward basic and acidic residues; the sequence is NNPDRLEKQKYCPRERKVTLHRETK.

The protein belongs to the bacterial ribosomal protein bL33 family.

This Enterococcus faecalis (strain ATCC 700802 / V583) protein is Large ribosomal subunit protein bL33C (rpmG3).